The chain runs to 214 residues: Adenylate kinase (214 aa).

10-15 contributes to the ATP binding site; the sequence is GAGKGT. The tract at residues 30–59 is NMP; it reads STGDMFRAAVKNETPLGLEAKSYMDKGHLV. AMP is bound by residues Thr31, Arg36, 57–59, 85–88, and Gln92; these read HLV and GFPR. The LID stretch occupies residues 126–163; the sequence is GRWICPVCGASYHTMFNPPKEAGVCDKDGGKLYQREDD. An ATP-binding site is contributed by Arg127. 2 residues coordinate Zn(2+): Cys130 and Cys133. 136 to 137 provides a ligand contact to ATP; that stretch reads SY. The Zn(2+) site is built by Cys150 and Asp153. 2 residues coordinate AMP: Arg160 and Arg171. Gln199 contributes to the ATP binding site.

Belongs to the adenylate kinase family. As to quaternary structure, monomer.

It localises to the cytoplasm. It catalyses the reaction AMP + ATP = 2 ADP. It participates in purine metabolism; AMP biosynthesis via salvage pathway; AMP from ADP: step 1/1. Functionally, catalyzes the reversible transfer of the terminal phosphate group between ATP and AMP. Plays an important role in cellular energy homeostasis and in adenine nucleotide metabolism. This is Adenylate kinase from Brevibacillus brevis (strain 47 / JCM 6285 / NBRC 100599).